The following is a 486-amino-acid chain: tRNA sulfurtransferase (486 aa).

The region spanning 63–167 (DAFAERLGCI…HEKLYMVVRR (105 aa)) is the THUMP domain. ATP is bound by residues 185–186 (LI), lysine 267, glycine 289, and glutamine 298. Cysteine 346 and cysteine 460 form a disulfide bridge. A Rhodanese domain is found at 408–486 (VDTQEVVIDI…GYTNVKVYRP (79 aa)). The active-site Cysteine persulfide intermediate is the cysteine 460.

Belongs to the ThiI family.

Its subcellular location is the cytoplasm. The catalysed reaction is [ThiI sulfur-carrier protein]-S-sulfanyl-L-cysteine + a uridine in tRNA + 2 reduced [2Fe-2S]-[ferredoxin] + ATP + H(+) = [ThiI sulfur-carrier protein]-L-cysteine + a 4-thiouridine in tRNA + 2 oxidized [2Fe-2S]-[ferredoxin] + AMP + diphosphate. It catalyses the reaction [ThiS sulfur-carrier protein]-C-terminal Gly-Gly-AMP + S-sulfanyl-L-cysteinyl-[cysteine desulfurase] + AH2 = [ThiS sulfur-carrier protein]-C-terminal-Gly-aminoethanethioate + L-cysteinyl-[cysteine desulfurase] + A + AMP + 2 H(+). It participates in cofactor biosynthesis; thiamine diphosphate biosynthesis. Catalyzes the ATP-dependent transfer of a sulfur to tRNA to produce 4-thiouridine in position 8 of tRNAs, which functions as a near-UV photosensor. Also catalyzes the transfer of sulfur to the sulfur carrier protein ThiS, forming ThiS-thiocarboxylate. This is a step in the synthesis of thiazole, in the thiamine biosynthesis pathway. The sulfur is donated as persulfide by IscS. The polypeptide is tRNA sulfurtransferase (Shewanella denitrificans (strain OS217 / ATCC BAA-1090 / DSM 15013)).